The following is a 462-amino-acid chain: Cysteine--tRNA ligase (462 aa).

Cysteine 30 is a Zn(2+) binding site. Positions 32 to 42 match the 'HIGH' region motif; it reads MTVYDYCHVGH. Zn(2+) contacts are provided by cysteine 214, histidine 239, and glutamate 243. The 'KMSKS' region signature appears at 271–275; that stretch reads KMSKS. Lysine 274 provides a ligand contact to ATP.

The protein belongs to the class-I aminoacyl-tRNA synthetase family. As to quaternary structure, monomer. It depends on Zn(2+) as a cofactor.

It is found in the cytoplasm. It carries out the reaction tRNA(Cys) + L-cysteine + ATP = L-cysteinyl-tRNA(Cys) + AMP + diphosphate. The protein is Cysteine--tRNA ligase of Cupriavidus necator (strain ATCC 17699 / DSM 428 / KCTC 22496 / NCIMB 10442 / H16 / Stanier 337) (Ralstonia eutropha).